We begin with the raw amino-acid sequence, 213 residues long: Probable nicotinate-nucleotide adenylyltransferase (213 aa).

The protein belongs to the NadD family.

It carries out the reaction nicotinate beta-D-ribonucleotide + ATP + H(+) = deamido-NAD(+) + diphosphate. Its pathway is cofactor biosynthesis; NAD(+) biosynthesis; deamido-NAD(+) from nicotinate D-ribonucleotide: step 1/1. Its function is as follows. Catalyzes the reversible adenylation of nicotinate mononucleotide (NaMN) to nicotinic acid adenine dinucleotide (NaAD). This chain is Probable nicotinate-nucleotide adenylyltransferase, found in Shigella boydii serotype 4 (strain Sb227).